Reading from the N-terminus, the 602-residue chain is Elongation factor 4 (602 aa).

One can recognise a tr-type G domain in the interval 7 to 188 (ENIRNFSIIA…AIIDLVPPPK (182 aa)). Residues 19-24 (DHGKST) and 135-138 (NKID) each bind GTP.

The protein belongs to the TRAFAC class translation factor GTPase superfamily. Classic translation factor GTPase family. LepA subfamily.

The protein localises to the cell inner membrane. It catalyses the reaction GTP + H2O = GDP + phosphate + H(+). Functionally, required for accurate and efficient protein synthesis under certain stress conditions. May act as a fidelity factor of the translation reaction, by catalyzing a one-codon backward translocation of tRNAs on improperly translocated ribosomes. Back-translocation proceeds from a post-translocation (POST) complex to a pre-translocation (PRE) complex, thus giving elongation factor G a second chance to translocate the tRNAs correctly. Binds to ribosomes in a GTP-dependent manner. This chain is Elongation factor 4, found in Chlamydia pneumoniae (Chlamydophila pneumoniae).